The primary structure comprises 154 residues: Myoglobin (154 aa).

The region spanning 2–148 is the Globin domain; it reads GLSDGEWQQV…FRNDIAAKYK (147 aa). Ser-4 carries the post-translational modification Phosphoserine. His-65 is a nitrite binding site. His-65 contributes to the O2 binding site. His-94 is a binding site for heme b.

The protein belongs to the globin family. Monomeric.

Its subcellular location is the cytoplasm. The protein localises to the sarcoplasm. It catalyses the reaction Fe(III)-heme b-[protein] + nitric oxide + H2O = Fe(II)-heme b-[protein] + nitrite + 2 H(+). The enzyme catalyses H2O2 + AH2 = A + 2 H2O. Monomeric heme protein which primary function is to store oxygen and facilitate its diffusion within muscle tissues. Reversibly binds oxygen through a pentacoordinated heme iron and enables its timely and efficient release as needed during periods of heightened demand. Depending on the oxidative conditions of tissues and cells, and in addition to its ability to bind oxygen, it also has a nitrite reductase activity whereby it regulates the production of bioactive nitric oxide. Under stress conditions, like hypoxia and anoxia, it also protects cells against reactive oxygen species thanks to its pseudoperoxidase activity. The sequence is that of Myoglobin (MB) from Equus quagga burchellii (Burchell's zebra).